The chain runs to 200 residues: Dephospho-CoA kinase (200 aa).

Residues 4–200 form the DPCK domain; it reads TIGLTGSVAT…TFIERFVKNK (197 aa). 12 to 17 provides a ligand contact to ATP; it reads ATGKST.

It belongs to the CoaE family.

Its subcellular location is the cytoplasm. The catalysed reaction is 3'-dephospho-CoA + ATP = ADP + CoA + H(+). It participates in cofactor biosynthesis; coenzyme A biosynthesis; CoA from (R)-pantothenate: step 5/5. Its function is as follows. Catalyzes the phosphorylation of the 3'-hydroxyl group of dephosphocoenzyme A to form coenzyme A. The polypeptide is Dephospho-CoA kinase (Listeria monocytogenes serovar 1/2a (strain ATCC BAA-679 / EGD-e)).